Here is an 844-residue protein sequence, read N- to C-terminus: Serrate RNA effector molecule homolog B (844 aa).

Disordered stretches follow at residues 1–90 (MADS…HGSD), 277–401 (EAAK…PRPL), 555–575 (ELLS…GNPT), and 794–825 (PNPY…MRGD). Basic and acidic residues-rich tracts occupy residues 16-73 (FRRE…RHDI) and 277-337 (EAAK…ETRK). Positions 349–359 (SDDGSDSESDT) are enriched in acidic residues. Residues 376-397 (DTPKKEEETEKPKEKPKEDTVK) are compositionally biased toward basic and acidic residues.

The protein belongs to the ARS2 family. As to quaternary structure, interacts ncbp1/cbp80.

The protein localises to the nucleus. It is found in the nucleoplasm. It localises to the cytoplasm. Acts as a mediator between the cap-binding complex (CBC) and the primary microRNAs (miRNAs) processing machinery during cell proliferation. Contributes to the stability and delivery of capped primary miRNA transcripts to the primary miRNA processing complex, thereby playing a role in RNA-mediated gene silencing (RNAi) by miRNAs. The sequence is that of Serrate RNA effector molecule homolog B (srrt-b) from Xenopus laevis (African clawed frog).